The primary structure comprises 334 residues: Inositol 2-dehydrogenase (334 aa).

Belongs to the Gfo/Idh/MocA family. Homotetramer.

It catalyses the reaction myo-inositol + NAD(+) = scyllo-inosose + NADH + H(+). In terms of biological role, involved in the oxidation of myo-inositol (MI) to 2-keto-myo-inositol (2KMI or 2-inosose). In Cereibacter sphaeroides (strain ATCC 17023 / DSM 158 / JCM 6121 / CCUG 31486 / LMG 2827 / NBRC 12203 / NCIMB 8253 / ATH 2.4.1.) (Rhodobacter sphaeroides), this protein is Inositol 2-dehydrogenase.